Consider the following 187-residue polypeptide: METLTSSSQSLISSPMSKKDYSSEIICAFDIGAKNPARTVLEVKDNSVRVLDISKLDWSSDWERHIAKDLSQYEYTTVLLERQPRRSPYVKFIYFIKGFLYHTSAAKVICVSPVMSGNSYRDRKKRSVEAFLDWMDTFGLRDSVPDRRKLDDVADSFNLAMRYVLDKWNTNYTPYNRCKSRNYIKKM.

Belongs to the RuvC family. Poxviruses-type subfamily. Requires Mg(2+) as cofactor. In terms of processing, acylated by palmitic acid group(s).

The protein localises to the membrane. Its function is as follows. Nuclease that specifically cleaves and resolves four-way DNA Holliday junctions into linear duplex products. In Vaccinia virus (strain Ankara) (VACV), this protein is Holliday junction resolvase.